The following is a 224-amino-acid chain: Envelope glycoprotein L (224 aa).

Residues M1–G19 form the signal peptide. The segment at G20 to V161 is interaction with gH. Residues S23–T201 form the gL alphaherpesvirus-type domain. Intrachain disulfides connect C44–C76 and C149–C160. The segment at V161–L224 is disordered. The span at K213 to L224 shows a compositional bias: basic residues.

This sequence belongs to the herpesviridae glycoprotein L (gL) family. Alphaherpesvirinae gL subfamily. Interacts with glycoprotein H (gH); this interaction is necessary for the correct processing and cell surface expression of gH. The heterodimer gH/gL seems to interact with gB trimers during fusion.

The protein resides in the virion membrane. Its subcellular location is the host cell membrane. It localises to the host Golgi apparatus. The protein localises to the host trans-Golgi network. In terms of biological role, the heterodimer glycoprotein H-glycoprotein L is required for the fusion of viral and plasma membranes leading to virus entry into the host cell. Acts as a functional inhibitor of gH and maintains gH in an inhibited form. Upon binding to host integrins, gL dissociates from gH leading to activation of the viral fusion glycoproteins gB and gH. The protein is Envelope glycoprotein L of Human herpesvirus 1 (strain 17) (HHV-1).